We begin with the raw amino-acid sequence, 411 residues long: Bifunctional protein GlmU (411 aa).

Residues 1–204 (MDAIILCAGK…NGKLHGIELN (204 aa)) are pyrophosphorylase. Residues 6–9 (LCAG), Gln74, and Gly79 contribute to the UTP site. Residues Thr80, Gly130, Asn142, and Asn158 each contribute to the N-acetyl-alpha-D-glucosamine 1-phosphate site. Positions 205-224 (GYWNDIGHPWDVLSANNRFL) are linker. Residues 225 to 411 (NKIISKVSGK…DELVITKKRN (187 aa)) form an N-acetyltransferase region. Catalysis depends on His308, which acts as the Proton acceptor. Positions 384 and 401 each coordinate acetyl-CoA.

The protein in the N-terminal section; belongs to the N-acetylglucosamine-1-phosphate uridyltransferase family. It in the C-terminal section; belongs to the transferase hexapeptide repeat family.

The catalysed reaction is N-acetyl-alpha-D-glucosamine 1-phosphate + UTP + H(+) = UDP-N-acetyl-alpha-D-glucosamine + diphosphate. It catalyses the reaction alpha-D-glucosamine 1-phosphate + acetyl-CoA = N-acetyl-alpha-D-glucosamine 1-phosphate + CoA + H(+). The protein operates within nucleotide-sugar biosynthesis; UDP-N-acetyl-alpha-D-glucosamine biosynthesis; N-acetyl-alpha-D-glucosamine 1-phosphate from alpha-D-glucosamine 6-phosphate (route II): step 2/2. It participates in nucleotide-sugar biosynthesis; UDP-N-acetyl-alpha-D-glucosamine biosynthesis; UDP-N-acetyl-alpha-D-glucosamine from N-acetyl-alpha-D-glucosamine 1-phosphate: step 1/1. Its function is as follows. Catalyzes the last two sequential reactions in the de novo biosynthetic pathway for UDP-N-acetyl-glucosamine (UDP-GlcNAc). Responsible for the acetylation of GlcN-1-P to GlcNAc-1-P, and for the uridyl transfer from UTP to GlcNAc-1-P, to produce UDP-GlcNAc and pyrophosphate. This is Bifunctional protein GlmU from Methanococcus maripaludis (strain C7 / ATCC BAA-1331).